A 181-amino-acid polypeptide reads, in one-letter code: Nucleoside-triphosphatase THEP1 (181 aa).

Residues 12–19 (GPVGSIKS) and 104–111 (VIVIDEIG) each bind ATP.

Belongs to the THEP1 NTPase family.

It catalyses the reaction a ribonucleoside 5'-triphosphate + H2O = a ribonucleoside 5'-diphosphate + phosphate + H(+). Functionally, has nucleotide phosphatase activity towards ATP, GTP, CTP, TTP and UTP. May hydrolyze nucleoside diphosphates with lower efficiency. This Thermoplasma acidophilum (strain ATCC 25905 / DSM 1728 / JCM 9062 / NBRC 15155 / AMRC-C165) protein is Nucleoside-triphosphatase THEP1.